We begin with the raw amino-acid sequence, 237 residues long: Sugar fermentation stimulation protein homolog (237 aa).

Belongs to the SfsA family.

In Azorhizobium caulinodans (strain ATCC 43989 / DSM 5975 / JCM 20966 / LMG 6465 / NBRC 14845 / NCIMB 13405 / ORS 571), this protein is Sugar fermentation stimulation protein homolog.